The following is a 510-amino-acid chain: 2,3-bisphosphoglycerate-independent phosphoglycerate mutase (510 aa).

Asp12 and Ser62 together coordinate Mn(2+). Ser62 functions as the Phosphoserine intermediate in the catalytic mechanism. Residues His123, 153-154, Arg185, Arg191, 260-263, and Lys335 contribute to the substrate site; these read RD and RPDR. Positions 402, 406, 443, 444, and 461 each coordinate Mn(2+).

Belongs to the BPG-independent phosphoglycerate mutase family. Monomer. Mn(2+) serves as cofactor.

The enzyme catalyses (2R)-2-phosphoglycerate = (2R)-3-phosphoglycerate. It functions in the pathway carbohydrate degradation; glycolysis; pyruvate from D-glyceraldehyde 3-phosphate: step 3/5. Functionally, catalyzes the interconversion of 2-phosphoglycerate and 3-phosphoglycerate. The sequence is that of 2,3-bisphosphoglycerate-independent phosphoglycerate mutase from Listeria innocua serovar 6a (strain ATCC BAA-680 / CLIP 11262).